The primary structure comprises 62 residues: Large ribosomal subunit protein bL28 (62 aa).

This sequence belongs to the bacterial ribosomal protein bL28 family.

The protein is Large ribosomal subunit protein bL28 of Helicobacter acinonychis (strain Sheeba).